The primary structure comprises 126 residues: Small ribosomal subunit protein uS13 (126 aa).

Positions 94 to 126 (RNLPVHGQRTHTNARTRKGPRRAIAGKKKAGKK) are disordered.

The protein belongs to the universal ribosomal protein uS13 family. In terms of assembly, part of the 30S ribosomal subunit. Forms a loose heterodimer with protein S19. Forms two bridges to the 50S subunit in the 70S ribosome.

In terms of biological role, located at the top of the head of the 30S subunit, it contacts several helices of the 16S rRNA. In the 70S ribosome it contacts the 23S rRNA (bridge B1a) and protein L5 of the 50S subunit (bridge B1b), connecting the 2 subunits; these bridges are implicated in subunit movement. Contacts the tRNAs in the A and P-sites. In Parafrankia sp. (strain EAN1pec), this protein is Small ribosomal subunit protein uS13.